Consider the following 86-residue polypeptide: Small ribosomal subunit protein bS20 (86 aa).

The protein belongs to the bacterial ribosomal protein bS20 family.

Functionally, binds directly to 16S ribosomal RNA. The sequence is that of Small ribosomal subunit protein bS20 from Pseudarthrobacter chlorophenolicus (strain ATCC 700700 / DSM 12829 / CIP 107037 / JCM 12360 / KCTC 9906 / NCIMB 13794 / A6) (Arthrobacter chlorophenolicus).